The chain runs to 95 residues: Large ribosomal subunit protein eL42 (95 aa).

Zn(2+) is bound by residues Cys-11, Cys-14, Cys-71, and Cys-74. A C4-type zinc finger spans residues 11–74 (CPRCNTHTEH…QVLVITCTVC (64 aa)).

The protein belongs to the eukaryotic ribosomal protein eL42 family. As to quaternary structure, part of the 50S ribosomal subunit. It depends on Zn(2+) as a cofactor.

Its function is as follows. Binds to the 23S rRNA. This is Large ribosomal subunit protein eL42 from Aeropyrum pernix (strain ATCC 700893 / DSM 11879 / JCM 9820 / NBRC 100138 / K1).